Consider the following 555-residue polypeptide: Beta-caryophyllene synthase (555 aa).

Residues Asp-313, Asp-317, Asp-456, and Glu-464 each contribute to the Mg(2+) site. The DDXXD motif signature appears at 313-317; it reads DDIYD.

The protein belongs to the terpene synthase family. Mg(2+) is required as a cofactor.

The enzyme catalyses (2E,6E)-farnesyl diphosphate = (+)-(E)-beta-caryophyllene + diphosphate. The protein operates within secondary metabolite biosynthesis; terpenoid biosynthesis. Its function is as follows. Sesquiterpene synthase converting farnesyl diphosphate to beta-caryophyllene as the major product. This chain is Beta-caryophyllene synthase, found in Phyla dulcis (Aztec sweet herb).